The sequence spans 245 residues: Pyridoxine 5'-phosphate synthase (245 aa).

N9 contacts 3-amino-2-oxopropyl phosphate. 11–12 is a binding site for 1-deoxy-D-xylulose 5-phosphate; the sequence is DH. R20 contacts 3-amino-2-oxopropyl phosphate. The active-site Proton acceptor is H45. 1-deoxy-D-xylulose 5-phosphate contacts are provided by R47 and H52. E72 functions as the Proton acceptor in the catalytic mechanism. Position 102 (T102) interacts with 1-deoxy-D-xylulose 5-phosphate. The Proton donor role is filled by H193. Residues G194 and 215-216 contribute to the 3-amino-2-oxopropyl phosphate site; that span reads GH.

It belongs to the PNP synthase family. In terms of assembly, homooctamer; tetramer of dimers.

Its subcellular location is the cytoplasm. The catalysed reaction is 3-amino-2-oxopropyl phosphate + 1-deoxy-D-xylulose 5-phosphate = pyridoxine 5'-phosphate + phosphate + 2 H2O + H(+). The protein operates within cofactor biosynthesis; pyridoxine 5'-phosphate biosynthesis; pyridoxine 5'-phosphate from D-erythrose 4-phosphate: step 5/5. Functionally, catalyzes the complicated ring closure reaction between the two acyclic compounds 1-deoxy-D-xylulose-5-phosphate (DXP) and 3-amino-2-oxopropyl phosphate (1-amino-acetone-3-phosphate or AAP) to form pyridoxine 5'-phosphate (PNP) and inorganic phosphate. This is Pyridoxine 5'-phosphate synthase from Shewanella oneidensis (strain ATCC 700550 / JCM 31522 / CIP 106686 / LMG 19005 / NCIMB 14063 / MR-1).